A 121-amino-acid chain; its full sequence is Small ribosomal subunit protein uS13 (121 aa).

The disordered stretch occupies residues 94–121; that stretch reads GLPVRGQNTKNNSRTRKGPRRTVANKKK. Residues 106–121 are compositionally biased toward basic residues; sequence SRTRKGPRRTVANKKK.

This sequence belongs to the universal ribosomal protein uS13 family. Part of the 30S ribosomal subunit. Forms a loose heterodimer with protein S19. Forms two bridges to the 50S subunit in the 70S ribosome.

Located at the top of the head of the 30S subunit, it contacts several helices of the 16S rRNA. In the 70S ribosome it contacts the 23S rRNA (bridge B1a) and protein L5 of the 50S subunit (bridge B1b), connecting the 2 subunits; these bridges are implicated in subunit movement. Contacts the tRNAs in the A and P-sites. The polypeptide is Small ribosomal subunit protein uS13 (Halalkalibacterium halodurans (strain ATCC BAA-125 / DSM 18197 / FERM 7344 / JCM 9153 / C-125) (Bacillus halodurans)).